The following is a 1767-amino-acid chain: Endo-alpha-N-acetylgalactosaminidase (1767 aa).

Residues 1 to 39 (MNKGLFEKRCKYSIRKFSLGVASVMIGATFFGTSPVLAD) form the signal peptide. 2 stretches are compositionally biased toward basic and acidic residues: residues 63–75 (NDGH…KVGE) and 84–111 (DGPK…DKPA). Disordered stretches follow at residues 63–137 (NDGH…QGTV) and 301–324 (VKTD…GPEV). The segment covering 112–124 (AAKPETPKTVTPE) has biased composition (low complexity). 2 stretches are compositionally biased toward basic and acidic residues: residues 127-137 (TVEKKEQQGTV) and 304-324 (DNQE…GPEV). Ca(2+)-binding residues include aspartate 577, asparagine 579, aspartate 581, lysine 583, and aspartate 588. A catalytic region spans residues 602 to 893 (GWKKVKDITA…DVMTKYFQHF (292 aa)). Aspartate 658 is a binding site for substrate. Aspartate 764 serves as the catalytic Nucleophile. Catalysis depends on glutamate 796, which acts as the Proton donor/acceptor. 5 residues coordinate Ca(2+): aspartate 1233, glutamate 1235, glutamate 1281, tryptophan 1284, and aspartate 1411. An LPXTG sorting signal motif is present at residues 1735-1739 (LPATG). Threonine 1738 carries the post-translational modification Pentaglycyl murein peptidoglycan amidated threonine. A propeptide spans 1739-1767 (GESQFDTALFLASVSLALSALFVVKTKKD) (removed by sortase).

Belongs to the glycosyl hydrolase 101 family. A subfamily.

The protein localises to the secreted. It is found in the cell wall. The enzyme catalyses a 3-O-[beta-D-galactosyl-(1-&gt;3)-N-acetyl-alpha-D-galactosaminyl]-L-threonyl-[protein] + H2O = beta-D-galactosyl-(1-&gt;3)-N-acetyl-D-galactosamine + L-threonyl-[protein]. It carries out the reaction a 3-O-[beta-D-galactosyl-(1-&gt;3)-N-acetyl-alpha-D-galactosaminyl]-L-seryl-[protein] + H2O = beta-D-galactosyl-(1-&gt;3)-N-acetyl-D-galactosamine + L-seryl-[protein]. Its function is as follows. Involved in the breakdown of mucin-type O-linked glycans. Specifically removes the T-antigen disaccharide (Gal-beta-1,3-GalNAc-alpha) from extracellular host glycoproteins. Representative of a broadly important class of virulence factors. The chain is Endo-alpha-N-acetylgalactosaminidase from Streptococcus pneumoniae (strain ATCC BAA-255 / R6).